Reading from the N-terminus, the 103-residue chain is Toxin BMLCL (103 aa).

The N-terminal stretch at 1–21 (MKTLLLTLVVVTIICLDLGYT) is a signal peptide. Disulfide bonds link Cys24–Cys45, Cys27–Cys37, Cys38–Cys72, Cys76–Cys90, and Cys91–Cys96.

This sequence belongs to the three-finger toxin family. Ancestral subfamily. Orphan group XVII sub-subfamily. In terms of tissue distribution, expressed by the venom gland.

The protein resides in the secreted. In terms of biological role, interacts with high efficiency with both neuronal alpha-7/CHRNA7 and muscle type nicotinic acetylcholine receptors (nAChRs). Tested on human alpha-7/CHRNA7 nAChR (IC(50)=42 nM), T.californica muscle receptor (IC(50)=31 nM), L.stagnalis and A.californica acetylcholine-binding proteins (IC(50)=333 nM and 3.4 uM, respectively). This is Toxin BMLCL from Bungarus multicinctus (Many-banded krait).